Reading from the N-terminus, the 96-residue chain is Muconolactone Delta-isomerase (96 aa).

This sequence belongs to the muconolactone Delta-isomerase family. In terms of assembly, homodecamer.

It catalyses the reaction (S)-muconolactone = (4,5-dihydro-5-oxofuran-2-yl)-acetate. It functions in the pathway aromatic compound metabolism; beta-ketoadipate pathway; 5-oxo-4,5-dihydro-2-furylacetate from catechol: step 3/3. The sequence is that of Muconolactone Delta-isomerase (catC) from Acinetobacter baylyi (strain ATCC 33305 / BD413 / ADP1).